The primary structure comprises 173 residues: Disulfide bond formation protein B (173 aa).

Topologically, residues M1–S16 are cytoplasmic. A helical membrane pass occupies residues W17 to Y33. The Periplasmic segment spans residues F34–I51. C43 and C46 are joined by a disulfide. The chain crosses the membrane as a helical span at residues A52 to P67. Over Q68–W74 the chain is Cytoplasmic. The helical transmembrane segment at L75–I92 threads the bilayer. Residues E93–Q147 are Periplasmic-facing. An intrachain disulfide couples C107 to C133. The chain crosses the membrane as a helical span at residues W148–A166. Over Q167–R173 the chain is Cytoplasmic.

The protein belongs to the DsbB family.

It localises to the cell inner membrane. In terms of biological role, required for disulfide bond formation in some periplasmic proteins. Acts by oxidizing the DsbA protein. This Vibrio cholerae serotype O1 (strain ATCC 39315 / El Tor Inaba N16961) protein is Disulfide bond formation protein B.